We begin with the raw amino-acid sequence, 293 residues long: uncharacterized protein (293 aa).

Basic residues predominate over residues 1–10; the sequence is MHMQLRKRKR. The tract at residues 1–28 is disordered; it reads MHMQLRKRKRVDYSGRNQTSDPPSTTTA. A compositionally biased stretch (polar residues) spans 15–28; that stretch reads GRNQTSDPPSTTTA.

The protein localises to the nucleus. This is an uncharacterized protein from Saccharomyces cerevisiae (strain ATCC 204508 / S288c) (Baker's yeast).